We begin with the raw amino-acid sequence, 700 residues long: Elongation factor G (700 aa).

Residues Glu8–Ile290 form the tr-type G domain. Residues Ala17–Thr24, Asp88–His92, and Asn142–Asp145 each bind GTP.

Belongs to the TRAFAC class translation factor GTPase superfamily. Classic translation factor GTPase family. EF-G/EF-2 subfamily.

Its subcellular location is the cytoplasm. Catalyzes the GTP-dependent ribosomal translocation step during translation elongation. During this step, the ribosome changes from the pre-translocational (PRE) to the post-translocational (POST) state as the newly formed A-site-bound peptidyl-tRNA and P-site-bound deacylated tRNA move to the P and E sites, respectively. Catalyzes the coordinated movement of the two tRNA molecules, the mRNA and conformational changes in the ribosome. The sequence is that of Elongation factor G from Methylibium petroleiphilum (strain ATCC BAA-1232 / LMG 22953 / PM1).